The primary structure comprises 1120 residues: MMQWTSLVQKAQSFIDPANFTIPNLTSSSDRNPSKSSLFRQQFRLPDSQNPLQEITAELILPVSHTSSSASGAQSKNIDRGGNRYAGRLHLSERFLCFSTQPTSFLPSATLATSTYWAGQTNGTGPSGNGFTIPLCSIRRVERLNSQSHIFSLALTTWNGALGKQQAPGFTPQRFTIELVGSRQACERFCDGLKKNLRESMKEIENLRLVVNDCYSEYLLSGAKSKAQSADDPEARPPPDAGLGMLFRYPGDARKLRDRSKMRLWGEYFRENGRNATLIRQPTFHKLIRVGLPNRLRGEIWEVASGSLNLRLRSPKLYEQTLAKFEGQESLAIDEIEKDLNRSLPEYAGFQSEEGIGRLRRVLTAYSWTNAEIGYCQAMNIVVAALLIYMSEAQAFFLLSVLCDRLVPGYYSTTMYGTLLDQKVFESLVEKTMPILWDHLNKSDVQLSVVSLPWFLSLYINSMPLVFAFRVLDVFFLEGPKVLFQVGLAILRINGEELLDVQDDGSFISVLKSYFSRLDESAHPRSENPKLRAITRFQELMVVAFKEFSQITHQTITEQREKHKDAVLENIESFAKRTSIRNLGPESKKLSSDDLGAIYDRYYEVLYDYQQRQKVIEEEKKRQERKKSQRVSVIGPSVDREVGRVGLGPSPTHMDYNAFREFLAATAKWAIADSPGPSRKQSDSGSFRGLGRPTMNKRPSPADHEFMQRLFRKWSTDPDDGLSLQDVVNGIARLKGPRDIMNNITYFFDLYDDNGDGKVDREGILRMSEALLFLSRRGFDGTITPSQSTENLMPGKEEDKLSTGERFLGSVSSFIRRCFEYADPTKKTLEAEKLAETTDNLNSFSIGDDEEDLIDVGDDEVKSESTPSPEGETPGTPSLEPTERKRARSTSEAANPALDPNNPLHITLPTFRMVVLADELLEQFFDNYFPQSFHLSEQGAAAAQLPSLSSNLTTFSNIGAAKQQPTSSGPTVAGASGGIVPPNRGLRGVLDNIVTDGIRMAAEVKKRMDEAQRELERNALNRDDDDEDDEDDDGHHGTAPAIVGGISSWGAGAYGADPERRSVRETDRDLLEGAEVVNIRGKDDVSLLDDKDSHQESSSGQRTAAGSDDKVVSKVVEFES.

The 189-residue stretch at 291-479 (GLPNRLRGEI…RVLDVFFLEG (189 aa)) folds into the Rab-GAP TBC domain. Disordered stretches follow at residues 673–702 (DSPG…PSPA), 859–903 (DEVK…PNNP), 960–979 (AAKQ…SGGI), 1017–1068 (RNAL…ETDR), and 1081–1120 (GKDD…EFES). A compositionally biased stretch (low complexity) spans 864–878 (ESTPSPEGETPGTPS). The segment covering 960–970 (AAKQQPTSSGP) has biased composition (polar residues). The span at 1023–1032 (DDDDEDDEDD) shows a compositional bias: acidic residues. Composition is skewed to basic and acidic residues over residues 1057 to 1068 (DPERRSVRETDR) and 1081 to 1095 (GKDD…DSHQ).

The polypeptide is Putative GTPase-activating protein AN11010 (Emericella nidulans (strain FGSC A4 / ATCC 38163 / CBS 112.46 / NRRL 194 / M139) (Aspergillus nidulans)).